The sequence spans 286 residues: Energy-coupling factor transporter ATP-binding protein EcfA2 (286 aa).

The 242-residue stretch at 3-244 folds into the ABC transporter domain; it reads IKVENVSFIY…AERLEKIGLS (242 aa). ATP is bound at residue 40–47; that stretch reads GHTGSGKS.

This sequence belongs to the ABC transporter superfamily. Energy-coupling factor EcfA family. In terms of assembly, forms a stable energy-coupling factor (ECF) transporter complex composed of 2 membrane-embedded substrate-binding proteins (S component), 2 ATP-binding proteins (A component) and 2 transmembrane proteins (T component).

The protein resides in the cell membrane. In terms of biological role, ATP-binding (A) component of a common energy-coupling factor (ECF) ABC-transporter complex. Unlike classic ABC transporters this ECF transporter provides the energy necessary to transport a number of different substrates. This Caldanaerobacter subterraneus subsp. tengcongensis (strain DSM 15242 / JCM 11007 / NBRC 100824 / MB4) (Thermoanaerobacter tengcongensis) protein is Energy-coupling factor transporter ATP-binding protein EcfA2.